Here is an 84-residue protein sequence, read N- to C-terminus: Phosphoribosylformylglycinamidine synthase subunit PurS (84 aa).

Belongs to the PurS family. As to quaternary structure, homodimer or homotetramer. Part of the FGAM synthase complex composed of 1 PurL, 1 PurQ and 2 PurS subunits.

It localises to the cytoplasm. The enzyme catalyses N(2)-formyl-N(1)-(5-phospho-beta-D-ribosyl)glycinamide + L-glutamine + ATP + H2O = 2-formamido-N(1)-(5-O-phospho-beta-D-ribosyl)acetamidine + L-glutamate + ADP + phosphate + H(+). It participates in purine metabolism; IMP biosynthesis via de novo pathway; 5-amino-1-(5-phospho-D-ribosyl)imidazole from N(2)-formyl-N(1)-(5-phospho-D-ribosyl)glycinamide: step 1/2. Part of the phosphoribosylformylglycinamidine synthase complex involved in the purines biosynthetic pathway. Catalyzes the ATP-dependent conversion of formylglycinamide ribonucleotide (FGAR) and glutamine to yield formylglycinamidine ribonucleotide (FGAM) and glutamate. The FGAM synthase complex is composed of three subunits. PurQ produces an ammonia molecule by converting glutamine to glutamate. PurL transfers the ammonia molecule to FGAR to form FGAM in an ATP-dependent manner. PurS interacts with PurQ and PurL and is thought to assist in the transfer of the ammonia molecule from PurQ to PurL. This chain is Phosphoribosylformylglycinamidine synthase subunit PurS, found in Bacillus subtilis (strain 168).